Consider the following 243-residue polypeptide: Uridylate kinase (243 aa).

15-18 (KLSG) serves as a coordination point for ATP. Glycine 56 lines the UMP pocket. Residues glycine 57 and arginine 61 each coordinate ATP. 138 to 145 (TGNPYFST) serves as a coordination point for UMP. ATP is bound by residues asparagine 166, tyrosine 172, and aspartate 175.

Belongs to the UMP kinase family. In terms of assembly, homohexamer.

The protein localises to the cytoplasm. It carries out the reaction UMP + ATP = UDP + ADP. The protein operates within pyrimidine metabolism; CTP biosynthesis via de novo pathway; UDP from UMP (UMPK route): step 1/1. With respect to regulation, inhibited by UTP. Catalyzes the reversible phosphorylation of UMP to UDP. This Mycoplasma genitalium (strain ATCC 33530 / DSM 19775 / NCTC 10195 / G37) (Mycoplasmoides genitalium) protein is Uridylate kinase.